The following is a 507-amino-acid chain: Histidine ammonia-lyase (507 aa).

The segment at residues 141–143 (ASG) is a cross-link (5-imidazolinone (Ala-Gly)). 2,3-didehydroalanine (Ser) is present on Ser-142.

This sequence belongs to the PAL/histidase family. Contains an active site 4-methylidene-imidazol-5-one (MIO), which is formed autocatalytically by cyclization and dehydration of residues Ala-Ser-Gly.

Its subcellular location is the cytoplasm. The catalysed reaction is L-histidine = trans-urocanate + NH4(+). Its pathway is amino-acid degradation; L-histidine degradation into L-glutamate; N-formimidoyl-L-glutamate from L-histidine: step 1/3. This is Histidine ammonia-lyase from Cereibacter sphaeroides (strain ATCC 17023 / DSM 158 / JCM 6121 / CCUG 31486 / LMG 2827 / NBRC 12203 / NCIMB 8253 / ATH 2.4.1.) (Rhodobacter sphaeroides).